The following is a 286-amino-acid chain: 4-diphosphocytidyl-2-C-methyl-D-erythritol kinase (286 aa).

The active site involves K11. P94–S104 is an ATP binding site. The active site involves D136.

This sequence belongs to the GHMP kinase family. IspE subfamily.

It catalyses the reaction 4-CDP-2-C-methyl-D-erythritol + ATP = 4-CDP-2-C-methyl-D-erythritol 2-phosphate + ADP + H(+). It functions in the pathway isoprenoid biosynthesis; isopentenyl diphosphate biosynthesis via DXP pathway; isopentenyl diphosphate from 1-deoxy-D-xylulose 5-phosphate: step 3/6. Catalyzes the phosphorylation of the position 2 hydroxy group of 4-diphosphocytidyl-2C-methyl-D-erythritol. The protein is 4-diphosphocytidyl-2-C-methyl-D-erythritol kinase of Pseudomonas putida (strain GB-1).